Reading from the N-terminus, the 120-residue chain is cAMP-responsive element-binding protein-like 2 (120 aa).

The tract at residues 1–24 (MDDSKVVGGKVKKPGKRGRKPAKI) is disordered. A compositionally biased stretch (basic residues) spans 10–21 (KVKKPGKRGRKP). The bZIP domain maps to 23 to 86 (KIDLKAKLER…MAMDQGKIPS (64 aa)). Residues 29-60 (KLERSRQSARECRARKKLRYQYLEELVSSRER) are basic motif. Positions 62 to 69 (ICALREEL) are leucine-zipper. The disordered stretch occupies residues 93–120 (TGEEQNKSQQNSSRHTKAGKTDANSNSW).

It belongs to the bZIP family. ATF subfamily. As to quaternary structure, interacts with CREB1; regulates CREB1 phosphorylation, stability and transcriptional activity. In terms of processing, phosphorylated by AMPK.

The protein resides in the nucleus. Probable regulator of CREB1 transcriptional activity which is involved in adipose cells differentiation. May also play a regulatory role in the cell cycle. Identification in a chromosomal region frequently deleted in various cancers suggests that it might act as a tumor suppressor. In Homo sapiens (Human), this protein is cAMP-responsive element-binding protein-like 2 (CREBL2).